The sequence spans 449 residues: CCAAT/enhancer-binding protein (449 aa).

Disordered stretches follow at residues 211–233 (HATYNNSSDENSSVGSDSSTIKE), 276–302 (GNPLNGGNTTPSSNGSNGSTGSSNGSQ), and 334–386 (SKLH…KAKV). Low complexity-rich tracts occupy residues 215–229 (NNSSDENSSVGSDSS), 280–301 (NGGNTTPSSNGSNGSTGSSNGS), and 339–349 (QQQHQQHQQQQ). Residues 357 to 368 (KHVDKGTDEYRR) show a composition bias toward basic and acidic residues. Positions 363–426 (TDEYRRRRER…QLHKQIYMQL (64 aa)) constitute a bZIP domain. Positions 367–396 (RRRRERNNIAVRKSREKAKVRSREVEERVK) are basic motif. A leucine-zipper region spans residues 398–405 (LLKEKDAL).

It belongs to the bZIP family. C/EBP subfamily. Binds DNA as a dimer and can form stable heterodimers. Interacts with trbl. In terms of processing, ubiquitination/deubiquitination regulates border cell migration. Ubiquitination is stimulated by trbl, which leads to proteasomal degradation and inhibits border cell migration. Deubiquitination by Usp47, leads to its stabilization and promotes border cell migration.

Its subcellular location is the nucleus. Functionally, required for the expression of gene products mediating border cell migration. Among the DNA sequences that this protein binds with high affinity is a conserved site within the promoter of its gene. The polypeptide is CCAAT/enhancer-binding protein (slbo) (Drosophila melanogaster (Fruit fly)).